The primary structure comprises 386 residues: MISHLFQTYGRRTVEFVKGNGTKVIDNNGKQYLDFTSGIGVCNLGHCHPTVMKAVQEQLNDIWHISNLFTNSLQEEVASLLTENIALDYVFFCNSGAEANEAALKLARKHTGKSLVVTCEQSFHGRTFGTMSATGQNKVKEGFGPLLPSFLHTPFNDIKALKEVMNEEVAAVMVEVVQGEGGVIPADLSFLKEIETLCKKFGSLFIIDEVQTGIGRTGTLFAYEQMGIDPHIVTTAKALGNGIPVGAMIGRKELGTSFTAGSHGSTFGGNYVAMAAAKEVLQVSKRLSFLKEVQEKGEYVLQKLQEELQHVECIQNIRGKGLMVGIECTHEVASFIEQLEKEGLLVLQAGPNVIRLLPPLIVTNEELEQAVYMIKKVVCTKNVSII.

Residues 96–97 (GA) and Phe123 contribute to the pyridoxal 5'-phosphate site. Arg126 contacts N(2)-acetyl-L-ornithine. 208–211 (DEVQ) provides a ligand contact to pyridoxal 5'-phosphate. Residue Lys237 is modified to N6-(pyridoxal phosphate)lysine. Ser265 lines the N(2)-acetyl-L-ornithine pocket. Residue Thr266 coordinates pyridoxal 5'-phosphate.

The protein belongs to the class-III pyridoxal-phosphate-dependent aminotransferase family. ArgD subfamily. As to quaternary structure, homodimer. Pyridoxal 5'-phosphate is required as a cofactor.

It localises to the cytoplasm. The enzyme catalyses N(2)-acetyl-L-ornithine + 2-oxoglutarate = N-acetyl-L-glutamate 5-semialdehyde + L-glutamate. It participates in amino-acid biosynthesis; L-arginine biosynthesis; N(2)-acetyl-L-ornithine from L-glutamate: step 4/4. This Bacillus anthracis protein is Acetylornithine aminotransferase.